A 124-amino-acid chain; its full sequence is MSTPNPETTAQRLIVNDIRPLSIETEIISLTKDIITHTFIYLINHECIVRKLDERQATFTFLVNYEMKLLHKVGSTKYNKYTEYNRKYGTLPMPIFINHDGFLECIGIKPTRHTPIIYKYDLNP.

A DLNP; interaction with MAP1B motif is present at residues 121–124 (DLNP).

Belongs to the pneumovirus non-structural protein 2 family. As to quaternary structure, monomer (instable). Homomultimer. Heteromultimer with NS1. Interacts with host RIGI (via N-terminus); this interaction prevents host signaling pathway involved in interferon production. Interacts with host MAP1B/microtubule-associated protein 1B.

The protein localises to the host mitochondrion. Functionally, plays a major role in antagonizing the type I IFN-mediated antiviral response. Acts cooperatively with NS1 to repress activation and nuclear translocation of host IFN-regulatory factor IRF3. Interacts with the host cytoplasmic sensor of viral nucleic acids RIGI and prevents the interaction with its downstream partner MAVS. Together with NS2, participates in the proteasomal degradation of host STAT2, IRF3, IRF7, TBK1 and RIGI through a NS-degradasome involving CUL2 and Elongin-C. The degradasome requires an intact mitochondrial MAVS. Induces host SOCS1 expression. Induces activation of NF-kappa-B. Suppresses premature apoptosis by an NF-kappa-B-dependent, interferon-independent mechanism promoting continued viral replication. The polypeptide is Non-structural protein 2 (1B) (Bos taurus (Bovine)).